The chain runs to 249 residues: Phosphate import ATP-binding protein PstB (249 aa).

Residues 3–244 enclose the ABC transporter domain; that stretch reads IEANDVHVYY…PKKKRTQNYI (242 aa). ATP is bound at residue 35-42; that stretch reads GPSGCGKS.

Belongs to the ABC transporter superfamily. Phosphate importer (TC 3.A.1.7) family. As to quaternary structure, the complex is composed of two ATP-binding proteins (PstB), two transmembrane proteins (PstC and PstA) and a solute-binding protein (PstS).

It is found in the cell inner membrane. The enzyme catalyses phosphate(out) + ATP + H2O = ADP + 2 phosphate(in) + H(+). Functionally, part of the ABC transporter complex PstSACB involved in phosphate import. Responsible for energy coupling to the transport system. This chain is Phosphate import ATP-binding protein PstB, found in Cytophaga hutchinsonii (strain ATCC 33406 / DSM 1761 / CIP 103989 / NBRC 15051 / NCIMB 9469 / D465).